The following is a 131-amino-acid chain: ATP synthase epsilon chain (131 aa).

The protein belongs to the ATPase epsilon chain family. As to quaternary structure, F-type ATPases have 2 components, CF(1) - the catalytic core - and CF(0) - the membrane proton channel. CF(1) has five subunits: alpha(3), beta(3), gamma(1), delta(1), epsilon(1). CF(0) has three main subunits: a, b and c.

It is found in the cell inner membrane. Its function is as follows. Produces ATP from ADP in the presence of a proton gradient across the membrane. This is ATP synthase epsilon chain from Helicobacter hepaticus (strain ATCC 51449 / 3B1).